A 247-amino-acid chain; its full sequence is tRNA pseudouridine synthase A (247 aa).

The active-site Nucleophile is the D53. Residue Y111 participates in substrate binding.

The protein belongs to the tRNA pseudouridine synthase TruA family. As to quaternary structure, homodimer.

It carries out the reaction uridine(38/39/40) in tRNA = pseudouridine(38/39/40) in tRNA. Formation of pseudouridine at positions 38, 39 and 40 in the anticodon stem and loop of transfer RNAs. The protein is tRNA pseudouridine synthase A of Bacillus subtilis (strain 168).